Consider the following 618-residue polypeptide: Putative ATP-dependent DNA helicase Q1 (618 aa).

Positions I95–I270 constitute a Helicase ATP-binding domain. L108 to S115 serves as a coordination point for ATP. The short motif at D214 to H217 is the DEVH box element. The region spanning C295–S443 is the Helicase C-terminal domain. Positions 448, 466, 470, and 473 each coordinate Zn(2+). Residues K586 to L618 form a disordered region. Residues S603 to L618 show a composition bias toward acidic residues.

It belongs to the helicase family. RecQ subfamily. The cofactor is Zn(2+).

The protein resides in the nucleus. It carries out the reaction Couples ATP hydrolysis with the unwinding of duplex DNA by translocating in the 3'-5' direction.. It catalyses the reaction ATP + H2O = ADP + phosphate + H(+). DNA helicase that may play a role in the repair of DNA that is damaged by ultraviolet light or other mutagens. Exhibits a magnesium-dependent ATP-dependent DNA-helicase activity that unwinds single- and double-stranded DNA in a 3'-5' direction. This Caenorhabditis briggsae protein is Putative ATP-dependent DNA helicase Q1.